Here is a 231-residue protein sequence, read N- to C-terminus: Regulatory protein VanRc (231 aa).

One can recognise a Response regulatory domain in the interval 4 to 117; the sequence is KIVVVDDEKE…EVVARVKTQL (114 aa). A 4-aspartylphosphate modification is found at Asp-53. The ompR/PhoB-type DNA-binding region spans 132 to 231; sequence VEEYEKDGLI…VWGVGYIIEK (100 aa).

Phosphorylated by VanSc.

It localises to the cytoplasm. In terms of biological role, member of the two-component regulatory system VanSc/VanRc. Binds to the promoter regions of target genes. Activates the transcription of vanC1 and vanXYC in response to vancomycin which results in vancomycin resistance. The sequence is that of Regulatory protein VanRc from Enterococcus gallinarum.